The chain runs to 317 residues: MATH domain and coiled-coil domain-containing protein At3g58240 (317 aa).

The 126-residue stretch at 6 to 131 folds into the MATH domain; sequence DNKFTWVIKN…DGEVEIVAQI (126 aa). The stretch at 254-305 forms a coiled coil; that stretch reads KLDWLEKKLDEVKEIKKKCERVTEMEKELHDLMNKHTNVSKLLEKEKLEIKN.

In Arabidopsis thaliana (Mouse-ear cress), this protein is MATH domain and coiled-coil domain-containing protein At3g58240.